Consider the following 286-residue polypeptide: Formamidopyrimidine-DNA glycosylase (286 aa).

Catalysis depends on Pro-2, which acts as the Schiff-base intermediate with DNA. Glu-3 acts as the Proton donor in catalysis. Catalysis depends on Lys-61, which acts as the Proton donor; for beta-elimination activity. 3 residues coordinate DNA: His-96, Arg-115, and Lys-161. An FPG-type zinc finger spans residues Glu-247–Arg-281. The active-site Proton donor; for delta-elimination activity is Arg-271.

This sequence belongs to the FPG family. As to quaternary structure, monomer. Zn(2+) is required as a cofactor.

The enzyme catalyses Hydrolysis of DNA containing ring-opened 7-methylguanine residues, releasing 2,6-diamino-4-hydroxy-5-(N-methyl)formamidopyrimidine.. It catalyses the reaction 2'-deoxyribonucleotide-(2'-deoxyribose 5'-phosphate)-2'-deoxyribonucleotide-DNA = a 3'-end 2'-deoxyribonucleotide-(2,3-dehydro-2,3-deoxyribose 5'-phosphate)-DNA + a 5'-end 5'-phospho-2'-deoxyribonucleoside-DNA + H(+). Functionally, involved in base excision repair of DNA damaged by oxidation or by mutagenic agents. Acts as a DNA glycosylase that recognizes and removes damaged bases. Has a preference for oxidized purines, such as 7,8-dihydro-8-oxoguanine (8-oxoG). Has AP (apurinic/apyrimidinic) lyase activity and introduces nicks in the DNA strand. Cleaves the DNA backbone by beta-delta elimination to generate a single-strand break at the site of the removed base with both 3'- and 5'-phosphates. This Mycobacteroides abscessus (strain ATCC 19977 / DSM 44196 / CCUG 20993 / CIP 104536 / JCM 13569 / NCTC 13031 / TMC 1543 / L948) (Mycobacterium abscessus) protein is Formamidopyrimidine-DNA glycosylase.